The following is a 261-amino-acid chain: THO complex subunit THP2 (261 aa).

As to quaternary structure, component of the THO complex, which is composed of HPR1, MFT1, THO2 and THP2. Together with SUB2, TEX1 and YRA1, THO forms the transcription/export (TREX) complex. THO associates with DNA and RNA in vitro.

It is found in the nucleus. Functionally, component the THO subcomplex of the TREX complex, which operates in coupling transcription elongation to mRNA export. The THO complex is recruited to transcribed genes and moves along the gene with the elongating polymerase during transcription. THO is important for stabilizing nascent RNA in the RNA polymerase II elongation complex by preventing formation of DNA:RNA hybrids behind the elongating polymerase. It functions in cotranscriptional formation of an export-competent messenger ribonucleoprotein particle (mRNP) by facilitating the loading of ATP-dependent RNA helicase SUB2 and the mRNA export factor YRA1 along the nascent mRNA. In Saccharomyces cerevisiae (strain ATCC 204508 / S288c) (Baker's yeast), this protein is THO complex subunit THP2 (THP2).